Reading from the N-terminus, the 143-residue chain is Large ribosomal subunit protein uL13 (143 aa).

This sequence belongs to the universal ribosomal protein uL13 family. In terms of assembly, part of the 50S ribosomal subunit.

This protein is one of the early assembly proteins of the 50S ribosomal subunit, although it is not seen to bind rRNA by itself. It is important during the early stages of 50S assembly. This Prochlorococcus marinus (strain MIT 9312) protein is Large ribosomal subunit protein uL13.